The following is an 809-amino-acid chain: F-BAR domain only protein 2 (809 aa).

The 248-residue stretch at 3 to 250 (MAHFVENFWG…NMANTTIESL (248 aa)) folds into the F-BAR domain. Positions 3 to 274 (MAHFVENFWG…PGLIEFEECD (272 aa)) are mediates dimerization and binding to membranes enriched in Pi(4,5)-P2 and induces their tubulation. A coiled-coil region spans residues 87–156 (HLDLVRKLQE…CVEQERLKKE (70 aa)). Lys297 is covalently cross-linked (Glycyl lysine isopeptide (Lys-Gly) (interchain with G-Cter in SUMO2)). Positions 301-352 (DAESVECPDADSLNIPDVDEEGFSIKPEANQNDTKENHFYSSSDSDSEDEEP) are disordered. Ser312 bears the Phosphoserine mark. At Thr385 the chain carries Phosphothreonine. Residues Ser387, Ser394, Ser402, and Ser403 each carry the phosphoserine modification. Over residues 390–416 (VSRHSPVQMNRNSSNEELTKSKPSSLP) the composition is skewed to polar residues. Disordered stretches follow at residues 390-422 (VSRHSPVQMNRNSSNEELTKSKPSSLPTEKGTN) and 435-536 (LESS…PVSL). The span at 435 to 456 (LESSSAPLTSSSSARPTTPLSL) shows a compositional bias: low complexity. Phosphoserine occurs at positions 487, 492, 495, 507, 509, 510, and 532. Residues 501-520 (PLARAESSSSISSSASLSAA) show a composition bias toward low complexity. The mediates interaction with DAB2, EPS15, EPS15R and ITSN1 stretch occupies residues 520–809 (ANTPTVGVSR…FATGRYLADC (290 aa)). In terms of domain architecture, MHD spans 541–808 (TLPVAIALTE…RFATGRYLAD (268 aa)).

Belongs to the FCHO family. Homodimer; disulfide-linked. May form homotetramer. Interacts with AP2A1. Interacts with EPS15, EPS15R, ITSN1 and ITSN2; recruit those scaffolding proteins which in turn may interact with the adaptor protein complex AP-2 at the plasma membrane. Interacts with DAB2 (via DPF motifs); mediates LDL receptor/LDLR endocytosis. In terms of processing, ubiquitinated. Mainly undergoes monoubiquitination but also polyubiquitination. Ubiquitously expressed (at protein level).

It localises to the membrane. Its subcellular location is the clathrin-coated pit. In terms of biological role, functions in an early step of clathrin-mediated endocytosis. Has both a membrane binding/bending activity and the ability to recruit proteins essential to the formation of functional clathrin-coated pits. Has a lipid-binding activity with a preference for membranes enriched in phosphatidylserine and phosphoinositides (Pi(4,5) biphosphate) like the plasma membrane. Its membrane-bending activity might be important for the subsequent action of clathrin and adaptors in the formation of clathrin-coated vesicles. Involved in adaptor protein complex AP-2-dependent endocytosis of the transferrin receptor, it also functions in the AP-2-independent endocytosis of the LDL receptor. The chain is F-BAR domain only protein 2 (Fcho2) from Mus musculus (Mouse).